Here is a 139-residue protein sequence, read N- to C-terminus: Thioredoxin H-type (139 aa).

Residues 20 to 132 enclose the Thioredoxin domain; the sequence is ELAGGNVHLI…LHKKITAILD (113 aa). Residues C58 and C61 each act as nucleophile in the active site. C58 and C61 are joined by a disulfide.

The protein localises to the cytoplasm. Its function is as follows. Participates in various redox reactions through the reversible oxidation of the active center dithiol to a disulfide. The H form is known to activate a number of cytosolic enzymes. This Populus jackii (Balm of Gilead) protein is Thioredoxin H-type.